Here is a 156-residue protein sequence, read N- to C-terminus: ATP synthase subunit b (156 aa).

The chain crosses the membrane as a helical span at residues 11-31; that stretch reads AIAFILFVWFCMKYVWPPLMA.

It belongs to the ATPase B chain family. F-type ATPases have 2 components, F(1) - the catalytic core - and F(0) - the membrane proton channel. F(1) has five subunits: alpha(3), beta(3), gamma(1), delta(1), epsilon(1). F(0) has three main subunits: a(1), b(2) and c(10-14). The alpha and beta chains form an alternating ring which encloses part of the gamma chain. F(1) is attached to F(0) by a central stalk formed by the gamma and epsilon chains, while a peripheral stalk is formed by the delta and b chains.

Its subcellular location is the cell inner membrane. In terms of biological role, f(1)F(0) ATP synthase produces ATP from ADP in the presence of a proton or sodium gradient. F-type ATPases consist of two structural domains, F(1) containing the extramembraneous catalytic core and F(0) containing the membrane proton channel, linked together by a central stalk and a peripheral stalk. During catalysis, ATP synthesis in the catalytic domain of F(1) is coupled via a rotary mechanism of the central stalk subunits to proton translocation. Component of the F(0) channel, it forms part of the peripheral stalk, linking F(1) to F(0). This is ATP synthase subunit b from Salmonella gallinarum (strain 287/91 / NCTC 13346).